Here is a 215-residue protein sequence, read N- to C-terminus: 3-demethoxyubiquinol 3-hydroxylase (215 aa).

Glu64, Glu94, His97, Glu146, Glu178, and His181 together coordinate Fe cation.

It belongs to the COQ7 family. Requires Fe cation as cofactor.

It is found in the cell membrane. The catalysed reaction is a 5-methoxy-2-methyl-3-(all-trans-polyprenyl)benzene-1,4-diol + AH2 + O2 = a 3-demethylubiquinol + A + H2O. Its pathway is cofactor biosynthesis; ubiquinone biosynthesis. Functionally, catalyzes the hydroxylation of 2-nonaprenyl-3-methyl-6-methoxy-1,4-benzoquinol during ubiquinone biosynthesis. This Bordetella avium (strain 197N) protein is 3-demethoxyubiquinol 3-hydroxylase.